We begin with the raw amino-acid sequence, 360 residues long: Chorismate synthase (360 aa).

Residues Arg-48 and Arg-54 each contribute to the NADP(+) site. Residues 125 to 127, 246 to 247, Gly-286, 301 to 305, and Arg-327 each bind FMN; these read RSS, NA, and KPTSS.

It belongs to the chorismate synthase family. As to quaternary structure, homotetramer. FMNH2 is required as a cofactor.

It catalyses the reaction 5-O-(1-carboxyvinyl)-3-phosphoshikimate = chorismate + phosphate. It participates in metabolic intermediate biosynthesis; chorismate biosynthesis; chorismate from D-erythrose 4-phosphate and phosphoenolpyruvate: step 7/7. Functionally, catalyzes the anti-1,4-elimination of the C-3 phosphate and the C-6 proR hydrogen from 5-enolpyruvylshikimate-3-phosphate (EPSP) to yield chorismate, which is the branch point compound that serves as the starting substrate for the three terminal pathways of aromatic amino acid biosynthesis. This reaction introduces a second double bond into the aromatic ring system. This chain is Chorismate synthase, found in Glaesserella parasuis serovar 5 (strain SH0165) (Haemophilus parasuis).